The chain runs to 199 residues: Translation initiation factor IF-3 (199 aa).

This sequence belongs to the IF-3 family. Monomer.

The protein resides in the cytoplasm. Its function is as follows. IF-3 binds to the 30S ribosomal subunit and shifts the equilibrium between 70S ribosomes and their 50S and 30S subunits in favor of the free subunits, thus enhancing the availability of 30S subunits on which protein synthesis initiation begins. This Gloeobacter violaceus (strain ATCC 29082 / PCC 7421) protein is Translation initiation factor IF-3.